Here is a 3788-residue protein sequence, read N- to C-terminus: Lysosomal-trafficking regulator (3788 aa).

Disordered regions lie at residues 148 to 180 and 198 to 217; these read KSTH…TVVS and EGHL…VLSD. S164 carries the phosphoserine modification. A Phosphothreonine modification is found at T165. Position 166 is a phosphoserine (S166). A WD 1 repeat occupies 662-700; it reads GPTSGLPSPSYRFQGILPSSGSEDLLWKWDALEAYQSFV. Disordered regions lie at residues 1169–1196, 1213–1240, and 1482–1519; these read LGPG…FSEE, GYEA…EAEG, and ESAA…TESI. Residues 1213–1232 show a composition bias toward acidic residues; the sequence is GYEADSESNPEDVDTQDDGV. S1503 and S1504 each carry phosphoserine. Residues 1576-1620 form a WD 2 repeat; the sequence is SQENIFFPSKWQHLVLTYIQHPQGKKNVHGEISIWVSGQRKTDVI. S2099, S2118, S2203, S2207, and S2254 each carry phosphoserine. The tract at residues 2177–2221 is disordered; the sequence is ANGVSRGSPRFPRARVDHKDVGTEPRSDDDSPGDESYPRRPDNLK. Basic and acidic residues predominate over residues 2190–2205; that stretch reads ARVDHKDVGTEPRSDD. 2 disordered regions span residues 2556–2581 and 2659–2681; these read HDSE…SIAG and NTSQ…HHEQ. Basic residues predominate over residues 2566–2578; it reads SAHRHSVPPKRRS. Over residues 2659-2671 the composition is skewed to polar residues; it reads NTSQSKTSVSQTE. Residues 2996 to 3102 form the BEACH-type PH domain; sequence AASESIRVNR…VRDDVYQSIL (107 aa). One can recognise a BEACH domain in the interval 3126–3409; the sequence is QITNFEYLTH…QLFHTAHASR (284 aa). WD repeat units follow at residues 3550-3589, 3601-3640, 3643-3686, 3687-3731, and 3736-3775; these read SQQH…STPS, GHTE…YVQS, GHKS…VGHV, HCRE…PVRE, and KSNK…RVKL.

Interacts with CPAP, LIP8 and ZNF521. In terms of tissue distribution, expressed in the heart, lung, liver, spleen, brain and in different immune cell types (purified B and T lymphocytes, bone marrow-derived macrophages and dendritic cells).

It is found in the cytoplasm. Its function is as follows. Adapter protein that regulates and/or fission of intracellular vesicles such as lysosomes. Might regulate trafficking of effectors involved in exocytosis. In cytotoxic T-cells and natural killer (NK) cells, has role in the regulation of size, number and exocytosis of lytic granules. In macrophages and dendritic cells, regulates phagosome maturation by controlling the conversion of early phagosomal compartments into late phagosomes. In macrophages and dendritic cells, specifically involved in TLR3- and TLR4-induced production of pro-inflammatory cytokines by regulating the endosomal TLR3- TICAM1/TRIF and TLR4- TICAM1/TRIF signaling pathways. In Mus musculus (Mouse), this protein is Lysosomal-trafficking regulator (Lyst).